The sequence spans 312 residues: DNA-directed RNA polymerase subunit alpha (312 aa).

Residues 1–226 (MIEFEKPIIT…EHLNLFTDLT (226 aa)) are alpha N-terminal domain (alpha-NTD). The alpha C-terminal domain (alpha-CTD) stretch occupies residues 243–312 (DEKVLDRTIE…DLGLGLKNDK (70 aa)).

This sequence belongs to the RNA polymerase alpha chain family. As to quaternary structure, homodimer. The RNAP catalytic core consists of 2 alpha, 1 beta, 1 beta' and 1 omega subunit. When a sigma factor is associated with the core the holoenzyme is formed, which can initiate transcription.

The catalysed reaction is RNA(n) + a ribonucleoside 5'-triphosphate = RNA(n+1) + diphosphate. DNA-dependent RNA polymerase catalyzes the transcription of DNA into RNA using the four ribonucleoside triphosphates as substrates. The chain is DNA-directed RNA polymerase subunit alpha from Streptococcus pyogenes serotype M1.